The primary structure comprises 157 residues: Transcriptional repressor NrdR (157 aa).

Residues 3 to 34 (CPFCGFADTRVIDSRLGKEGNNIRRRRECSQC) fold into a zinc finger. Residues 49 to 139 (PLIIKKDARR…VYRQFKDINE (91 aa)) form the ATP-cone domain.

The protein belongs to the NrdR family. Zn(2+) serves as cofactor.

In terms of biological role, negatively regulates transcription of bacterial ribonucleotide reductase nrd genes and operons by binding to NrdR-boxes. In Syntrophotalea carbinolica (strain DSM 2380 / NBRC 103641 / GraBd1) (Pelobacter carbinolicus), this protein is Transcriptional repressor NrdR.